Reading from the N-terminus, the 365-residue chain is Putrescine carbamoyltransferase (365 aa).

Residues 54 to 58 (STRTR), Arg105, and His132 each bind carbamoyl phosphate. 277-280 (HCLP) provides a ligand contact to putrescine.

The protein belongs to the aspartate/ornithine carbamoyltransferase superfamily. PTCase family. As to quaternary structure, homotrimer.

The protein localises to the cytoplasm. The catalysed reaction is carbamoyl phosphate + putrescine = N-carbamoylputrescine + phosphate + H(+). It functions in the pathway amine and polyamine biosynthesis; putrescine biosynthesis via agmatine pathway; putrescine from N-carbamoylputrescine (transferase route): step 1/1. Functionally, catalyzes the phosphorolysis of N-carbamoylputrescine to form carbamoyl phosphate and putrescine. Is involved in the degradation pathway of the polyamine agmatine. The sequence is that of Putrescine carbamoyltransferase from Mycoplasma mycoides subsp. mycoides SC (strain CCUG 32753 / NCTC 10114 / PG1).